We begin with the raw amino-acid sequence, 329 residues long: BTB/POZ domain-containing adapter for CUL3-mediated RhoA degradation protein 1 (329 aa).

Residues 1-31 (MSAEASGPAPAAAECLESPSPSSVEPGSPSY) are disordered. Residues 41–109 (KYVKLNVGGS…LRDGSVPLPE (69 aa)) form the BTB domain.

Belongs to the BACURD family. As to quaternary structure, homotetramer; forms a two-fold symmetric tetramer in solution. Interacts with CUL3; interaction is direct and forms a 5:5 heterodecamer. Component of the BCR(KCTD13) E3 ubiquitin ligase complex, at least composed of CUL3, KCTD13/BACURD1 and RBX1. Interacts with RHOA; with a preference for RhoA-GDP. Interacts with POLD2 and PCNA. Interacts with SPRTN.

Its subcellular location is the nucleus. It participates in protein modification; protein ubiquitination. Functionally, substrate-specific adapter of a BCR (BTB-CUL3-RBX1) E3 ubiquitin-protein ligase complex required for synaptic transmission. The BCR(KCTD13) E3 ubiquitin ligase complex mediates the ubiquitination of RHOA, leading to its degradation by the proteasome, thereby regulating the actin cytoskeleton and promoting synaptic transmission. The chain is BTB/POZ domain-containing adapter for CUL3-mediated RhoA degradation protein 1 (Kctd13) from Mus musculus (Mouse).